An 809-amino-acid polypeptide reads, in one-letter code: TPR repeat-containing protein TP_0920 (809 aa).

The interval 103–125 (PGEARALPNSEQPEVPASLDSTS) is disordered. TPR repeat units follow at residues 315–348 (LREYLLAGDIACAQHLYDEAEEAFNAALVQDPHC), 383–416 (AFLSNLCGHLALAQNRHEDAAAAYQRAFRLDPHQ), 418–450 (LFALHAAQELSLLGEKEQAIQAYLHAARLFLAQ), 471–504 (TEVRSIAGKLYYATGRHRQAHTQFDALCRAGSAD), 513–550 (LLLREAQGTHEHDAPAAAACEQRARDAFQRACALAPDC), 552–582 (LYHFKYAESLFLSEKDCDEPLARALALDPDN), 583–616 (GWLHNLCAQKALREQNFDAAAQSLQRARALLPHE), 656–689 (GQAFHLLANAFYADGCYEHAAPWYDKALREEPQN), and 723–756 (AHVYTLIALVAAQLGDFPRAELTLQEACTLWPQC).

The sequence is that of TPR repeat-containing protein TP_0920 from Treponema pallidum (strain Nichols).